The primary structure comprises 156 residues: Lipoprotein signal peptidase (156 aa).

3 helical membrane-spanning segments follow: residues 5-25 (FKFI…DQWV), 64-84 (YLHL…KTLL), and 89-109 (IAFG…FIHG). Catalysis depends on residues D113 and D130. A helical membrane pass occupies residues 122-142 (NFAIFNVADVMINISVALILI).

Belongs to the peptidase A8 family.

It is found in the cell inner membrane. The enzyme catalyses Release of signal peptides from bacterial membrane prolipoproteins. Hydrolyzes -Xaa-Yaa-Zaa-|-(S,diacylglyceryl)Cys-, in which Xaa is hydrophobic (preferably Leu), and Yaa (Ala or Ser) and Zaa (Gly or Ala) have small, neutral side chains.. Its pathway is protein modification; lipoprotein biosynthesis (signal peptide cleavage). In terms of biological role, this protein specifically catalyzes the removal of signal peptides from prolipoproteins. In Campylobacter jejuni subsp. jejuni serotype O:6 (strain 81116 / NCTC 11828), this protein is Lipoprotein signal peptidase.